The chain runs to 28 residues: Flagellar filament 34 kDa core protein (28 aa).

Belongs to the bacterial flagellin family. The flagellum consists of an outer layer composed of repeating units of FlaA around a core that contains several antigenically related polypeptides.

The protein localises to the periplasmic flagellum. It localises to the periplasm. Component of the core of the flagella. In Treponema phagedenis, this protein is Flagellar filament 34 kDa core protein.